The sequence spans 187 residues: Ribosome maturation factor RimM (187 aa).

The region spanning 95-178 is the PRC barrel domain; that stretch reads DEDEFFYADL…GLVEDKDESL (84 aa).

Belongs to the RimM family. As to quaternary structure, binds ribosomal protein uS19.

It is found in the cytoplasm. Its function is as follows. An accessory protein needed during the final step in the assembly of 30S ribosomal subunit, possibly for assembly of the head region. Essential for efficient processing of 16S rRNA. May be needed both before and after RbfA during the maturation of 16S rRNA. It has affinity for free ribosomal 30S subunits but not for 70S ribosomes. This chain is Ribosome maturation factor RimM, found in Sinorhizobium fredii (strain NBRC 101917 / NGR234).